Consider the following 414-residue polypeptide: Calcium/calmodulin-dependent protein kinase cmkA (414 aa).

The region spanning 23–278 is the Protein kinase domain; the sequence is YRFGRTLGAG…SEEALKHPWL (256 aa). ATP is bound by residues 29-37 and lysine 50; that span reads LGAGTYGIV. The active-site Proton acceptor is aspartate 142. An autoinhibitory domain region spans residues 278-314; that stretch reads LKGESASDRDLLPEIRAYIARSRLKRGIEIIKLANRI. Residues 293–315 form a calmodulin-binding region; sequence RAYIARSRLKRGIEIIKLANRIE. Disordered regions lie at residues 320 to 375 and 394 to 414; these read QEED…KRSL and EMKE…RAHS. A compositionally biased stretch (polar residues) spans 351 to 364; sequence STENSNTHPASTGN.

The protein belongs to the protein kinase superfamily. CAMK Ser/Thr protein kinase family. CaMK subfamily. As to quaternary structure, monomer. Post-translationally, autophosphorylated in a calcium/calmodulin-dependent manner.

It catalyses the reaction L-seryl-[protein] + ATP = O-phospho-L-seryl-[protein] + ADP + H(+). The catalysed reaction is L-threonyl-[protein] + ATP = O-phospho-L-threonyl-[protein] + ADP + H(+). Its activity is regulated as follows. Activated by Ca(2+)/calmodulin. Binding of calmodulin may relieve intrasteric autoinhibition. In terms of biological role, calcium/calmodulin-dependent protein kinase. Required in nuclear division cycle for progression from G2 to mitosis. Required for hyphal growth. This is Calcium/calmodulin-dependent protein kinase cmkA (cmkA) from Emericella nidulans (strain FGSC A4 / ATCC 38163 / CBS 112.46 / NRRL 194 / M139) (Aspergillus nidulans).